A 1179-amino-acid chain; its full sequence is Calcium-activated potassium channel subunit alpha-1 (1179 aa).

Positions 1 to 24 (MANGGGGGGGSSGGGGGGGGGGSG) are enriched in gly residues. Positions 1–62 (MANGGGGGGG…SSSSSSSSSV (62 aa)) are disordered. The Extracellular portion of the chain corresponds to 1–87 (MANGGGGGGG…VPCDSRGQRM (87 aa)). Positions 41 to 61 (SSSSSSSSSSSSSSSSSSSSS) are enriched in low complexity. A helical membrane pass occupies residues 88 to 108 (WWAFLASSMVTFFGGLFIILL). The Cytoplasmic portion of the chain corresponds to 109–179 (WRTLKYLWTV…MISAQTLTGR (71 aa)). Residues Cys119, Cys120, and Cys122 are each lipidated (S-palmitoyl cysteine). Residues 180–200 (VLVVLVFALSIGALVIYFIDS) traverse the membrane as a helical segment. Residues 201 to 215 (SNPIESCQNFYKDFT) lie on the Extracellular side of the membrane. A helical membrane pass occupies residues 216–236 (LQIDMAFNVFFLLYFGLRFIA). The Cytoplasmic segment spans residues 237 to 240 (ANDK). Residues 241–261 (LWFWLEVNSVVDFFTVPPVFV) traverse the membrane as a helical segment. Residues 262–265 (SVYL) are Extracellular-facing. The helical; Voltage-sensor transmembrane segment at 266–286 (NRSWLGLRFLRALRLIQFSEI) threads the bilayer. The Cytoplasmic segment spans residues 287-301 (LQFLNILKTSNSIKL). Residues 302-322 (VNLLSIFISTWLTAAGFIHLV) traverse the membrane as a helical segment. The Extracellular portion of the chain corresponds to 323-336 (ENSGDPWENFQNNQ). Positions 337-359 (ALTYWECVYLLMVTMSTVGYGDV) form an intramembrane region, pore-forming. Positions 353 to 356 (TVGY) match the Selectivity for potassium motif. At 360–368 (YAKTTLGRL) the chain is on the extracellular side. Residues 369 to 389 (FMVFFILGGLAMFASYVPEII) traverse the membrane as a helical segment. At 390–1179 (ELIGNRKKYG…KQKYVQEERL (790 aa)) the chain is on the cytoplasmic side. In terms of domain architecture, RCK N-terminal 1 spans 408–550 (RKHIVVCGHI…WNWKEGDDAI (143 aa)). Residues Glu440, Gln463, and Glu465 each contribute to the Mg(2+) site. Residues 557–577 (LGFIAQSCLAQGLSTMLANLF) are segment S7. The segment at 614–634 (LSFPTVCELCFVKLKLLMIAI) is segment S8. Residues 678 to 682 (CKACH) are heme-binding motif. Residues 702–730 (EQPSTLSPKKKQRNGGMRNSPNSSPKLMR) form a disordered region. Thr706 is subject to Phosphothreonine. Ser708, Ser721, and Ser725 each carry phosphoserine. A segment S9 region spans residues 780-800 (VLSGHVVVCIFGDVSSALIGL). The RCK N-terminal 2 domain occupies 782–926 (SGHVVVCIFG…MDRSSPDNSP (145 aa)). At Thr913 the chain carries Phosphothreonine. A phosphoserine mark is found at Ser921 and Ser925. Residues 946–968 (TELVNDTNVQFLDQDDDDDPDTE) carry the Calcium bowl motif. Residues Gln955, Asp958, Asp961, and Asp963 each coordinate Ca(2+). The segment S10 stretch occupies residues 975 to 995 (FACGTAFAVSVLDSLMSATYF). Residues 1129-1154 (RASLSHSSHSSQSSSKKSSSVHSIPS) are compositionally biased toward low complexity. A disordered region spans residues 1129–1179 (RASLSHSSHSSQSSSKKSSSVHSIPSTANRQNRPKSRESRDKQKYVQEERL). Residues 1163–1179 (KSRESRDKQKYVQEERL) show a composition bias toward basic and acidic residues. Ser1164 and Ser1167 each carry phosphoserine.

Belongs to the potassium channel family. Calcium-activated (TC 1.A.1.3) subfamily. KCa1.1/KCNMA1 sub-subfamily. In terms of assembly, homotetramer; which constitutes the calcium-activated potassium channel. Interacts with beta subunits KCNMB1, KCNMB2, KCNMB3 and KCNMB4. Interacts with gamma subunits LRRC26, LRRC38, LRRC52 and LRRC55. Beta and gamma subunits are accessory, and modulate its activity. Interacts with RAB11B. In terms of processing, phosphorylated. Phosphorylation by kinases such as PKA and/or PKG. In smooth muscles, phosphorylation affects its activity. Post-translationally, palmitoylation by ZDHHC22 and ZDHHC23 within the intracellular linker between the S0 and S1 transmembrane domains regulates localization to the plasma membrane. Depalmitoylated by LYPLA1 and LYPLAL1, leading to retard exit from the trans-Golgi network.

It is found in the cell membrane. The protein localises to the endoplasmic reticulum membrane. The enzyme catalyses K(+)(in) = K(+)(out). Its activity is regulated as follows. Ethanol and carbon monoxide-bound heme increase channel activation. Heme inhibits channel activation. Its function is as follows. Potassium channel activated by both membrane depolarization or increase in cytosolic Ca(2+) that mediates export of K(+). It is also activated by the concentration of cytosolic Mg(2+). Its activation dampens the excitatory events that elevate the cytosolic Ca(2+) concentration and/or depolarize the cell membrane. It therefore contributes to repolarization of the membrane potential. Plays a key role in controlling excitability in a number of systems, such as regulation of the contraction of smooth muscle, the tuning of hair cells in the cochlea, regulation of transmitter release, and innate immunity. In smooth muscles, its activation by high level of Ca(2+), caused by ryanodine receptors in the sarcoplasmic reticulum, regulates the membrane potential. In cochlea cells, its number and kinetic properties partly determine the characteristic frequency of each hair cell and thereby helps to establish a tonotopic map. Kinetics of KCNMA1 channels are determined by alternative splicing, phosphorylation status and its combination with modulating beta subunits. Highly sensitive to both iberiotoxin (IbTx) and charybdotoxin (CTX). Potassium channel activated by both membrane depolarization or increase in cytosolic Ca(2+) that mediates export of K(+). The protein is Calcium-activated potassium channel subunit alpha-1 (KCNMA1) of Oryctolagus cuniculus (Rabbit).